The sequence spans 365 residues: Putative glutamate--cysteine ligase 2-3 (365 aa).

It belongs to the glutamate--cysteine ligase type 2 family. YbdK subfamily.

The enzyme catalyses L-cysteine + L-glutamate + ATP = gamma-L-glutamyl-L-cysteine + ADP + phosphate + H(+). ATP-dependent carboxylate-amine ligase which exhibits weak glutamate--cysteine ligase activity. The polypeptide is Putative glutamate--cysteine ligase 2-3 (Mycolicibacterium smegmatis (strain ATCC 700084 / mc(2)155) (Mycobacterium smegmatis)).